The chain runs to 367 residues: Otolith matrix protein 1 (367 aa).

The first 23 residues, 1-23, serve as a signal peptide directing secretion; sequence MDRLDRRLAATLLLFSFISFSTQ. Residues 27–363 form the Transferrin-like domain; sequence ISWCVVSEAE…YTTVLQAFEC (337 aa).

The protein belongs to the transferrin family. As to quaternary structure, interacts with OTOL1. As to expression, expressed in the sacculus during the day.

Its subcellular location is the secreted. Required for normal otolith growth and deposition of otolin-1 in the otolith. The protein is Otolith matrix protein 1 (otomp) of Oncorhynchus mykiss (Rainbow trout).